The sequence spans 154 residues: Ubiquitin-like protein 4A (154 aa).

The 76-residue stretch at 1–76 (MILTVKPLQG…LNLVVRPAGE (76 aa)) folds into the Ubiquitin-like domain.

Component of the bag6/bat3 complex.

It localises to the cytoplasm. Its subcellular location is the cytosol. It is found in the nucleus. In terms of biological role, as part of a cytosolic protein quality control complex, the bag6/bat3 complex, maintains misfolded and hydrophobic patches-containing proteins in a soluble state and participates in their proper delivery to the endoplasmic reticulum or alternatively can promote their sorting to the proteasome where they undergo degradation. The bag6/bat3 complex is involved in the post-translational delivery of tail-anchored/type II transmembrane proteins to the endoplasmic reticulum membrane. Similarly, the bag6/bat3 complex also functions as a sorting platform for proteins of the secretory pathway that are mislocalized to the cytosol either delivering them to the proteasome for degradation or to the endoplasmic reticulum. The bag6/bat3 complex also plays a role in the endoplasmic reticulum-associated degradation (ERAD), a quality control mechanism that eliminates unwanted proteins of the endoplasmic reticulum through their retrotranslocation to the cytosol and their targeting to the proteasome. It maintains these retrotranslocated proteins in an unfolded yet soluble state condition in the cytosol to ensure their proper delivery to the proteasome. This Esox lucius (Northern pike) protein is Ubiquitin-like protein 4A (ubl4a).